The sequence spans 454 residues: Bifunctional protein GlmU (454 aa).

A pyrophosphorylase region spans residues 1 to 226 (MALNVVILAA…AIEVEGANNR (226 aa)). UDP-N-acetyl-alpha-D-glucosamine contacts are provided by residues 8 to 11 (LAAG), lysine 22, glutamine 73, 78 to 79 (GT), 100 to 102 (YGD), glycine 137, glutamate 151, asparagine 166, and asparagine 224. Aspartate 102 lines the Mg(2+) pocket. Asparagine 224 serves as a coordination point for Mg(2+). Residues 227–247 (VQLAQLERAYQAREAEKLMIA) form a linker region. The interval 248–454 (GANLRDPSRI…GWQRPVKIKK (207 aa)) is N-acetyltransferase. UDP-N-acetyl-alpha-D-glucosamine contacts are provided by arginine 330 and lysine 348. Histidine 360 (proton acceptor) is an active-site residue. UDP-N-acetyl-alpha-D-glucosamine-binding residues include tyrosine 363 and asparagine 374. Residues alanine 377, 383–384 (NY), serine 402, alanine 420, and arginine 437 contribute to the acetyl-CoA site.

It in the N-terminal section; belongs to the N-acetylglucosamine-1-phosphate uridyltransferase family. This sequence in the C-terminal section; belongs to the transferase hexapeptide repeat family. In terms of assembly, homotrimer. Requires Mg(2+) as cofactor.

The protein resides in the cytoplasm. The catalysed reaction is alpha-D-glucosamine 1-phosphate + acetyl-CoA = N-acetyl-alpha-D-glucosamine 1-phosphate + CoA + H(+). The enzyme catalyses N-acetyl-alpha-D-glucosamine 1-phosphate + UTP + H(+) = UDP-N-acetyl-alpha-D-glucosamine + diphosphate. Its pathway is nucleotide-sugar biosynthesis; UDP-N-acetyl-alpha-D-glucosamine biosynthesis; N-acetyl-alpha-D-glucosamine 1-phosphate from alpha-D-glucosamine 6-phosphate (route II): step 2/2. The protein operates within nucleotide-sugar biosynthesis; UDP-N-acetyl-alpha-D-glucosamine biosynthesis; UDP-N-acetyl-alpha-D-glucosamine from N-acetyl-alpha-D-glucosamine 1-phosphate: step 1/1. It participates in bacterial outer membrane biogenesis; LPS lipid A biosynthesis. Catalyzes the last two sequential reactions in the de novo biosynthetic pathway for UDP-N-acetylglucosamine (UDP-GlcNAc). The C-terminal domain catalyzes the transfer of acetyl group from acetyl coenzyme A to glucosamine-1-phosphate (GlcN-1-P) to produce N-acetylglucosamine-1-phosphate (GlcNAc-1-P), which is converted into UDP-GlcNAc by the transfer of uridine 5-monophosphate (from uridine 5-triphosphate), a reaction catalyzed by the N-terminal domain. This Shewanella sp. (strain ANA-3) protein is Bifunctional protein GlmU.